We begin with the raw amino-acid sequence, 342 residues long: S-methyl-5'-thioadenosine phosphorylase (342 aa).

Phosphate is bound by residues threonine 51, 99-100 (RH), and 132-133 (SA). Methionine 234 provides a ligand contact to substrate. Serine 235 contacts phosphate. 258–260 (DYD) serves as a coordination point for substrate.

This sequence belongs to the PNP/MTAP phosphorylase family. MTAP subfamily. Homotrimer.

The protein localises to the cytoplasm. The protein resides in the nucleus. It carries out the reaction S-methyl-5'-thioadenosine + phosphate = 5-(methylsulfanyl)-alpha-D-ribose 1-phosphate + adenine. The protein operates within amino-acid biosynthesis; L-methionine biosynthesis via salvage pathway; S-methyl-5-thio-alpha-D-ribose 1-phosphate from S-methyl-5'-thioadenosine (phosphorylase route): step 1/1. Catalyzes the reversible phosphorylation of S-methyl-5'-thioadenosine (MTA) to adenine and 5-methylthioribose-1-phosphate. Involved in the breakdown of MTA, a major by-product of polyamine biosynthesis. Responsible for the first step in the methionine salvage pathway after MTA has been generated from S-adenosylmethionine. Has broad substrate specificity with 6-aminopurine nucleosides as preferred substrates. The polypeptide is S-methyl-5'-thioadenosine phosphorylase (Aspergillus fumigatus (strain ATCC MYA-4609 / CBS 101355 / FGSC A1100 / Af293) (Neosartorya fumigata)).